We begin with the raw amino-acid sequence, 283 residues long: Pantothenate synthetase (283 aa).

Residue 30–37 (MGNLHDGH) coordinates ATP. Residue His37 is the Proton donor of the active site. Gln61 serves as a coordination point for (R)-pantoate. Gln61 serves as a coordination point for beta-alanine. An ATP-binding site is contributed by 149-152 (GEKD). Gln155 contacts (R)-pantoate. 186 to 189 (LSSR) is an ATP binding site.

The protein belongs to the pantothenate synthetase family. Homodimer.

It is found in the cytoplasm. The catalysed reaction is (R)-pantoate + beta-alanine + ATP = (R)-pantothenate + AMP + diphosphate + H(+). The protein operates within cofactor biosynthesis; (R)-pantothenate biosynthesis; (R)-pantothenate from (R)-pantoate and beta-alanine: step 1/1. In terms of biological role, catalyzes the condensation of pantoate with beta-alanine in an ATP-dependent reaction via a pantoyl-adenylate intermediate. This is Pantothenate synthetase from Escherichia coli O127:H6 (strain E2348/69 / EPEC).